The sequence spans 285 residues: Nucleotide-binding protein PSPTO_4456 (285 aa).

Residue 8–15 (GRSGSGKS) participates in ATP binding. 60-63 (DARN) is a GTP binding site.

It belongs to the RapZ-like family.

In terms of biological role, displays ATPase and GTPase activities. This Pseudomonas syringae pv. tomato (strain ATCC BAA-871 / DC3000) protein is Nucleotide-binding protein PSPTO_4456.